The primary structure comprises 450 residues: MGELQTHMQLQTDTIHEGVRKENWFAKAMNIKVGIIPLPVYALLFILITVFVMHHDVKSDILTSIAVMAFFGFTFAQIGKSIPIVRSIGGPAILATFIPSAVVYYHLLPNDIVKSTTEFTENSNFLYLFIAGIVVGSILGMKRETLVKAFMKIFIPLIVGSVTAAIVGLAVGTLLGLGFQHTLLYIVIPIMAGGVGEGAIPLSIGYSDIMPISQGEAFALVLPSIMLGSLCAIILAGLLNRIGKKKPEWTGNGKVDRSEEESPALEESQSGQQMFNLSLFASGGILAVSLYLVGMLAHDFFGFPAPVAMLLLAVLIKLFRLVPASIENGAFGVSRFFSTAVTYPLLFAIGVSMTPWDKLVAAFNLSNIITILSVVVTMMAVGFFTGKWLNMYPIETAIINACHSGQGGTGDVAILSAAERLELMPFAQVSTRIGGAITVSLTLLLLHQFY.

Topologically, residues 1-32 are cytoplasmic; it reads MGELQTHMQLQTDTIHEGVRKENWFAKAMNIK. The chain crosses the membrane as a helical span at residues 33–53; sequence VGIIPLPVYALLFILITVFVM. Topologically, residues 54–64 are extracellular; that stretch reads HHDVKSDILTS. Residues 65–85 form a helical membrane-spanning segment; it reads IAVMAFFGFTFAQIGKSIPIV. Residues 86-87 lie on the Cytoplasmic side of the membrane; the sequence is RS. A helical transmembrane segment spans residues 88 to 108; it reads IGGPAILATFIPSAVVYYHLL. The Extracellular portion of the chain corresponds to 109-118; it reads PNDIVKSTTE. Residues 119-139 form a helical membrane-spanning segment; that stretch reads FTENSNFLYLFIAGIVVGSIL. Residues 140 to 152 are Cytoplasmic-facing; sequence GMKRETLVKAFMK. Residues 153–173 traverse the membrane as a helical segment; the sequence is IFIPLIVGSVTAAIVGLAVGT. The Extracellular portion of the chain corresponds to 174 to 217; it reads LLGLGFQHTLLYIVIPIMAGGVGEGAIPLSIGYSDIMPISQGEA. A helical membrane pass occupies residues 218–238; sequence FALVLPSIMLGSLCAIILAGL. Over 239–273 the chain is Cytoplasmic; the sequence is LNRIGKKKPEWTGNGKVDRSEEESPALEESQSGQQ. The segment at 249 to 268 is disordered; that stretch reads WTGNGKVDRSEEESPALEES. The chain crosses the membrane as a helical span at residues 274 to 294; that stretch reads MFNLSLFASGGILAVSLYLVG. A topological domain (extracellular) is located at residue Met-295. Residues 296–316 traverse the membrane as a helical segment; that stretch reads LAHDFFGFPAPVAMLLLAVLI. Residues 317–335 are Cytoplasmic-facing; the sequence is KLFRLVPASIENGAFGVSR. A helical membrane pass occupies residues 336–356; sequence FFSTAVTYPLLFAIGVSMTPW. Residues 357-364 lie on the Extracellular side of the membrane; the sequence is DKLVAAFN. The helical transmembrane segment at 365–385 threads the bilayer; the sequence is LSNIITILSVVVTMMAVGFFT. Over 386 to 428 the chain is Cytoplasmic; sequence GKWLNMYPIETAIINACHSGQGGTGDVAILSAAERLELMPFAQ. Residues 429 to 446 traverse the membrane as a helical segment; the sequence is VSTRIGGAITVSLTLLLL. The Extracellular segment spans residues 447–450; the sequence is HQFY.

It belongs to the 2-hydroxycarboxylate transporter (2-HCT) (TC 2.A.24) family.

It is found in the cell membrane. It carries out the reaction citrate(in) + 3 H(+)(in) = citrate(out) + 3 H(+)(out). The catalysed reaction is (S)-malate(in) + 2 H(+)(in) = (S)-malate(out) + 2 H(+)(out). Its activity is regulated as follows. The uptake activity is inhibited by divalent metal ions such as Ca(2+), Mg(2+) and Ni(2+). In terms of biological role, proton motive force-driven secondary transporter that catalyzes the uptake of both citrate and malate. Is an electroneutral proton-solute symporter: the number of protons transported is equal to the valence of the transported anions. Translocates the free citrate and malate anions. Citramalate binds to the transporter, but it is not translocated. Is strictly stereoselective, recognizing only the (S)-enantiomers of malate and citramalate. The sequence is that of Citrate/malate-proton symporter from Bacillus subtilis (strain 168).